The sequence spans 224 residues: Type II restriction enzyme BstVI (224 aa).

This sequence belongs to the XhoI type II restriction endonuclease family.

The catalysed reaction is Endonucleolytic cleavage of DNA to give specific double-stranded fragments with terminal 5'-phosphates.. A P subtype restriction enzyme that recognizes the double-stranded sequence 5'-CTCGAG-3' and cleaves after C-1. In Geobacillus stearothermophilus (Bacillus stearothermophilus), this protein is Type II restriction enzyme BstVI.